Consider the following 104-residue polypeptide: Ig lambda-2 chain C region (104 aa).

The Ig-like domain occupies 6–99 (PTLTVFPPSS…EGDTVEKSLS (94 aa)). C27 and C85 are joined by a disulfide.

This Mus musculus (Mouse) protein is Ig lambda-2 chain C region (Iglc2).